Consider the following 212-residue polypeptide: Large ribosomal subunit protein uL1 (212 aa).

This sequence belongs to the universal ribosomal protein uL1 family. As to quaternary structure, part of the 50S ribosomal subunit.

Its function is as follows. Binds directly to 23S rRNA. Probably involved in E site tRNA release. Protein L1 is also a translational repressor protein, it controls the translation of its operon by binding to its mRNA. The protein is Large ribosomal subunit protein uL1 of Methanothrix thermoacetophila (strain DSM 6194 / JCM 14653 / NBRC 101360 / PT) (Methanosaeta thermophila).